A 274-amino-acid chain; its full sequence is Thymidylate synthase (274 aa).

A dUMP-binding site is contributed by arginine 21. A (6R)-5,10-methylene-5,6,7,8-tetrahydrofolate-binding site is contributed by histidine 51. Position 123–124 (123–124 (RR)) interacts with dUMP. Cysteine 156 (nucleophile) is an active-site residue. DUMP-binding positions include 176–179 (RSAD), asparagine 187, and 217–219 (HIY). Aspartate 179 serves as a coordination point for (6R)-5,10-methylene-5,6,7,8-tetrahydrofolate. Serine 273 lines the (6R)-5,10-methylene-5,6,7,8-tetrahydrofolate pocket.

The protein belongs to the thymidylate synthase family. Bacterial-type ThyA subfamily. In terms of assembly, homodimer.

Its subcellular location is the cytoplasm. It catalyses the reaction dUMP + (6R)-5,10-methylene-5,6,7,8-tetrahydrofolate = 7,8-dihydrofolate + dTMP. Its pathway is pyrimidine metabolism; dTTP biosynthesis. In terms of biological role, catalyzes the reductive methylation of 2'-deoxyuridine-5'-monophosphate (dUMP) to 2'-deoxythymidine-5'-monophosphate (dTMP) while utilizing 5,10-methylenetetrahydrofolate (mTHF) as the methyl donor and reductant in the reaction, yielding dihydrofolate (DHF) as a by-product. This enzymatic reaction provides an intracellular de novo source of dTMP, an essential precursor for DNA biosynthesis. This is Thymidylate synthase from Francisella tularensis subsp. holarctica (strain FTNF002-00 / FTA).